The chain runs to 229 residues: Potassium/proton antiporter CemA (229 aa).

The next 4 helical transmembrane spans lie at F7 to F27, M106 to L126, I154 to I174, and I189 to I209.

It belongs to the CemA family.

The protein localises to the plastid. It localises to the chloroplast inner membrane. It carries out the reaction K(+)(in) + H(+)(out) = K(+)(out) + H(+)(in). Contributes to K(+)/H(+) antiport activity by supporting proton efflux to control proton extrusion and homeostasis in chloroplasts in a light-dependent manner to modulate photosynthesis. Prevents excessive induction of non-photochemical quenching (NPQ) under continuous-light conditions. Indirectly promotes efficient inorganic carbon uptake into chloroplasts. The protein is Potassium/proton antiporter CemA of Spinacia oleracea (Spinach).